Consider the following 420-residue polypeptide: Protein disulfide isomerase CRELD1 (420 aa).

The signal sequence occupies residues 1 to 29 (MAPWPPKGLVPAMLWGLSLFLNLPGPIWL). The Extracellular portion of the chain corresponds to 30-362 (QPSPPPQSSP…GFFSEMTEDE (333 aa)). A CXXC motif is present at residues 46–49 (CHTC). An intrachain disulfide couples cysteine 46 to cysteine 49. N-linked (GlcNAc...) asparagine glycosylation is present at asparagine 79. An EGF-like 1 domain is found at 153–193 (LPCPGGTERPCGGYGQCEGEGTRGGSGHCDCQAGYGGEACG). 3 cysteine pairs are disulfide-bonded: cysteine 155-cysteine 169, cysteine 163-cysteine 181, and cysteine 183-cysteine 192. An N-linked (GlcNAc...) asparagine glycan is attached at asparagine 205. FU repeat units lie at residues 208–256 (HLVC…GANC) and 268–315 (SYEC…EVCP). The CXXC signature appears at 278-281 (CLGC). Disulfide bonds link cysteine 278-cysteine 281, cysteine 309-cysteine 321, cysteine 314-cysteine 330, and cysteine 332-cysteine 343. Residues 305–344 (DVDECETEVCPGENKQCENTEGGYRCICAEGYKQMEGICV) enclose the EGF-like 2; calcium-binding domain. The chain crosses the membrane as a helical span at residues 363-383 (LVVLQQMFFGIIICALATLAA). Lysine 384 is a topological domain (cytoplasmic). The helical transmembrane segment at 385 to 405 (GDLVFTAIFIGAVAAMTGYWL) threads the bilayer. The Extracellular portion of the chain corresponds to 406–420 (SERSDRVLEGFIKGR).

The protein belongs to the CRELD family. As to expression, highly expressed in fetal lung, liver, kidney, adult heart, brain and skeletal muscle. Weakly expressed in placenta, fetal brain, and adult lung, liver, kidney and pancreas.

Its subcellular location is the membrane. The catalysed reaction is Catalyzes the rearrangement of -S-S- bonds in proteins.. Protein disulfide isomerase. Promotes the localization of acetylcholine receptors (AChRs) to the plasma membrane. This Homo sapiens (Human) protein is Protein disulfide isomerase CRELD1 (CRELD1).